Consider the following 318-residue polypeptide: Annexin D6 (318 aa).

Ala-2 bears the N-acetylalanine mark. Annexin repeat units lie at residues 11–82, 83–154, 168–239, and 243–314; these read PLPE…LWTL, DPTE…PLVS, KLAR…TAIK, and YPEK…ALLG. Phe-24, Gly-26, Gly-28, and Glu-68 together coordinate Ca(2+). A Phosphoserine modification is found at Ser-95. A phosphothreonine mark is found at Thr-100 and Thr-112. Residue Tyr-129 is modified to Phosphotyrosine. Residues Ile-256, Arg-258, and Gly-260 each coordinate Ca(2+). Tyr-285 is subject to Phosphotyrosine. Phosphoserine is present on Ser-290. 2 residues coordinate Ca(2+): Asp-300 and Thr-301.

It belongs to the annexin (TC 1.A.31.1) family. In terms of tissue distribution, expressed in flowers.

In Arabidopsis thaliana (Mouse-ear cress), this protein is Annexin D6 (ANN6).